The following is a 286-amino-acid chain: Probable ketoamine kinase YniA (286 aa).

91–93 (DYL) contacts ATP. The active-site Proton acceptor is the Asp193.

This sequence belongs to the fructosamine kinase family.

Its function is as follows. Ketoamine kinase that phosphorylates ketoamines on the third carbon of the sugar moiety to generate ketoamine 3-phosphate. This Escherichia coli O157:H7 protein is Probable ketoamine kinase YniA (yniA).